We begin with the raw amino-acid sequence, 1033 residues long: Calcium-transporting ATPase 12, plasma membrane-type (1033 aa).

Met-1 carries the post-translational modification N-acetylmethionine. Over 1–152 (MRDLKEYDYS…NTYHKPPPKG (152 aa)) the chain is Cytoplasmic. Positions 25-36 (QRRWRFAYAAIY) are interaction with calmodulin. Residue Ser-37 is modified to Phosphoserine. Residues 153–173 (LLFFVYEAFKDLTILILLVCA) traverse the membrane as a helical segment. Residues 174-191 (IFSLGFGIKEHGIKEGWY) are Lumenal-facing. A helical transmembrane segment spans residues 192 to 212 (EGGSIFVAVFLVIVVSALSNF). The Cytoplasmic segment spans residues 213-341 (RQERQFDKLS…SERTPLQVRL (129 aa)). The helical transmembrane segment at 342 to 361 (DTLTSTIGKIGLTVAALVLV) threads the bilayer. Residues 362–397 (VLLVRYFTGNTEKEGKREYNGSKTPVDTVVNSVVRI) lie on the Lumenal side of the membrane. The chain crosses the membrane as a helical span at residues 398-415 (VAAAVTIVVVAIPEGLPL). Topologically, residues 416–806 (AVTLTLAYSM…KWGRCVYNNI (391 aa)) are cytoplasmic. The active-site 4-aspartylphosphate intermediate is Asp-453. Mg(2+)-binding residues include Asp-751 and Asp-755. A helical transmembrane segment spans residues 807-825 (QKFIQFQLTVNVAALVINF). Over 826–836 (IAAISAGEVPL) the chain is Lumenal. A helical transmembrane segment spans residues 837–857 (TAVQLLWVNLIMDTLGALALA). The Cytoplasmic portion of the chain corresponds to 858-877 (TERPTNELLKRKPVGRTEAL). A helical membrane pass occupies residues 878 to 900 (ITNVMWRNLLVQSLYQIAVLLIL). The Lumenal segment spans residues 901–909 (QFKGMSIFS). A helical membrane pass occupies residues 910 to 930 (VRKEVKDTLIFNTFVLCQVFN). Residues 931–948 (EFNAREMEKKNVFKGLHR) are Cytoplasmic-facing. The helical transmembrane segment at 949-970 (NRLFIGIIAITIVLQVIMVEFL) threads the bilayer. At 971 to 980 (KKFADTVRLN) the chain is on the lumenal side. The chain crosses the membrane as a helical span at residues 981–1002 (GWQWGTCIALASLSWPIGFFTK). Residues 1003–1006 (FIPV) are Cytoplasmic-facing.

The protein belongs to the cation transport ATPase (P-type) (TC 3.A.3) family. Type IIB subfamily.

The protein localises to the membrane. It carries out the reaction Ca(2+)(in) + ATP + H2O = Ca(2+)(out) + ADP + phosphate + H(+). With respect to regulation, activated by calmodulin. This magnesium-dependent enzyme catalyzes the hydrolysis of ATP coupled with the translocation of calcium from the cytosol out of the cell or into organelles. The sequence is that of Calcium-transporting ATPase 12, plasma membrane-type (ACA12) from Arabidopsis thaliana (Mouse-ear cress).